The following is a 131-amino-acid chain: Cuticle protein 79, isoform B (131 aa).

3 tandem repeats follow at residues A37 to A40, A45 to A48, and A53 to A56.

Component of the cuticle of migratory locust which contains more than 100 different structural proteins. The polypeptide is Cuticle protein 79, isoform B (Locusta migratoria (Migratory locust)).